The chain runs to 152 residues: Large-conductance mechanosensitive channel (152 aa).

Transmembrane regions (helical) follow at residues Val26–Ala46, Ile50–Thr70, and Ile92–Leu112.

This sequence belongs to the MscL family. Homopentamer.

The protein resides in the cell inner membrane. Channel that opens in response to stretch forces in the membrane lipid bilayer. May participate in the regulation of osmotic pressure changes within the cell. This chain is Large-conductance mechanosensitive channel, found in Gluconobacter oxydans (strain 621H) (Gluconobacter suboxydans).